A 345-amino-acid polypeptide reads, in one-letter code: Phosphoribosylformylglycinamidine cyclo-ligase (345 aa).

The protein belongs to the AIR synthase family.

It localises to the cytoplasm. The enzyme catalyses 2-formamido-N(1)-(5-O-phospho-beta-D-ribosyl)acetamidine + ATP = 5-amino-1-(5-phospho-beta-D-ribosyl)imidazole + ADP + phosphate + H(+). The protein operates within purine metabolism; IMP biosynthesis via de novo pathway; 5-amino-1-(5-phospho-D-ribosyl)imidazole from N(2)-formyl-N(1)-(5-phospho-D-ribosyl)glycinamide: step 2/2. This is Phosphoribosylformylglycinamidine cyclo-ligase from Shewanella woodyi (strain ATCC 51908 / MS32).